The primary structure comprises 178 residues: Endothelin-2 (178 aa).

Residues 1–26 (MVAMPTAWCSIALALLLALHEGKGQV) form the signal peptide. Residues 27–46 (AAAPDQPAPSHRARASHLRP) constitute a propeptide that is removed on maturation. Intrachain disulfides connect cysteine 49–cysteine 63 and cysteine 51–cysteine 59. The propeptide occupies 70-178 (VNTPGQTAPY…RPTHSRRWKR (109 aa)). An endothelin-like region spans residues 96-111 (CECSSGRDPACATFCH).

It belongs to the endothelin/sarafotoxin family.

The protein resides in the secreted. Endothelins are endothelium-derived vasoconstrictor peptides. The sequence is that of Endothelin-2 (EDN2) from Felis catus (Cat).